A 606-amino-acid polypeptide reads, in one-letter code: Transmembrane 9 superfamily member 1 (606 aa).

The first 27 residues, 1 to 27 (MTVLGHPRSWSCRWWPLLLLLLLTGRE), serve as a signal peptide directing secretion. An N-linked (GlcNAc...) asparagine glycan is attached at N178. 4 consecutive transmembrane segments (helical) span residues 237–257 (LSIINSMVLVFLLVGFVAVIL), 310–330 (VLGVGAQFLALGTGIIVMALL), 339–359 (GAINSAAILLYALTCCISGYV), and 373–393 (VWNIILTTSLFSVPFFLTWSV). N-linked (GlcNAc...) asparagine glycosylation is present at N401. Transmembrane regions (helical) follow at residues 412–432 (ILLLLTVWLLVGFPLTVIGGI), 469–489 (VGGFLPFSAISVELYYIFATV), 499–519 (GILFFVFAILLSVGACISIAL), and 535–555 (SVLSVGSTGLFIFLYSVFYYA). A glycan (N-linked (GlcNAc...) asparagine) is linked at N559. A helical transmembrane segment spans residues 570–590 (FGYSLLTGYVFFLMLGTISFF).

This sequence belongs to the nonaspanin (TM9SF) (TC 9.A.2) family.

The protein localises to the lysosome membrane. It localises to the cytoplasmic vesicle. The protein resides in the autophagosome membrane. Functionally, plays an essential role in autophagy. The sequence is that of Transmembrane 9 superfamily member 1 (TM9SF1) from Bos taurus (Bovine).